The sequence spans 508 residues: Histidine ammonia-lyase (508 aa).

Residues 141–143 (ASG) constitute a cross-link (5-imidazolinone (Ala-Gly)). S142 bears the 2,3-didehydroalanine (Ser) mark.

The protein belongs to the PAL/histidase family. Post-translationally, contains an active site 4-methylidene-imidazol-5-one (MIO), which is formed autocatalytically by cyclization and dehydration of residues Ala-Ser-Gly.

It localises to the cytoplasm. It catalyses the reaction L-histidine = trans-urocanate + NH4(+). The protein operates within amino-acid degradation; L-histidine degradation into L-glutamate; N-formimidoyl-L-glutamate from L-histidine: step 1/3. The sequence is that of Histidine ammonia-lyase from Geobacillus sp. (strain WCH70).